Here is a 272-residue protein sequence, read N- to C-terminus: Putative phosphoenolpyruvate synthase regulatory protein (272 aa).

Residue 152-159 (GVSRCGKT) participates in ADP binding.

Belongs to the pyruvate, phosphate/water dikinase regulatory protein family. PSRP subfamily.

It catalyses the reaction [pyruvate, water dikinase] + ADP = [pyruvate, water dikinase]-phosphate + AMP + H(+). The catalysed reaction is [pyruvate, water dikinase]-phosphate + phosphate + H(+) = [pyruvate, water dikinase] + diphosphate. Its function is as follows. Bifunctional serine/threonine kinase and phosphorylase involved in the regulation of the phosphoenolpyruvate synthase (PEPS) by catalyzing its phosphorylation/dephosphorylation. In Pseudomonas savastanoi pv. phaseolicola (strain 1448A / Race 6) (Pseudomonas syringae pv. phaseolicola (strain 1448A / Race 6)), this protein is Putative phosphoenolpyruvate synthase regulatory protein.